Consider the following 387-residue polypeptide: Phosphoglycerate kinase (387 aa).

Substrate-binding positions include 21–23, Arg-36, 59–62, Arg-113, and Arg-146; these read DLN and HLGR. ATP is bound by residues Lys-197, Glu-314, and 340–343; that span reads GGDT.

This sequence belongs to the phosphoglycerate kinase family. In terms of assembly, monomer.

Its subcellular location is the cytoplasm. The enzyme catalyses (2R)-3-phosphoglycerate + ATP = (2R)-3-phospho-glyceroyl phosphate + ADP. Its pathway is carbohydrate degradation; glycolysis; pyruvate from D-glyceraldehyde 3-phosphate: step 2/5. The sequence is that of Phosphoglycerate kinase from Pectobacterium carotovorum subsp. carotovorum (strain PC1).